A 427-amino-acid polypeptide reads, in one-letter code: 3-phosphoshikimate 1-carboxyvinyltransferase (427 aa).

3-phosphoshikimate-binding residues include Lys-20, Ser-21, and Arg-25. Position 20 (Lys-20) interacts with phosphoenolpyruvate. Positions 92 and 120 each coordinate phosphoenolpyruvate. Residues Ser-166, Gln-168, Asp-312, and Lys-339 each contribute to the 3-phosphoshikimate site. Gln-168 lines the phosphoenolpyruvate pocket. The Proton acceptor role is filled by Asp-312. Positions 343 and 385 each coordinate phosphoenolpyruvate.

Belongs to the EPSP synthase family. In terms of assembly, monomer.

It is found in the cytoplasm. It catalyses the reaction 3-phosphoshikimate + phosphoenolpyruvate = 5-O-(1-carboxyvinyl)-3-phosphoshikimate + phosphate. It functions in the pathway metabolic intermediate biosynthesis; chorismate biosynthesis; chorismate from D-erythrose 4-phosphate and phosphoenolpyruvate: step 6/7. Catalyzes the transfer of the enolpyruvyl moiety of phosphoenolpyruvate (PEP) to the 5-hydroxyl of shikimate-3-phosphate (S3P) to produce enolpyruvyl shikimate-3-phosphate and inorganic phosphate. This Streptococcus gordonii (strain Challis / ATCC 35105 / BCRC 15272 / CH1 / DL1 / V288) protein is 3-phosphoshikimate 1-carboxyvinyltransferase.